A 264-amino-acid chain; its full sequence is Small ribosomal subunit protein eS1B (264 aa).

Positions 1 to 19 are enriched in basic residues; that stretch reads MALGKNKRISKGGKRGKRG. Positions 1–23 are disordered; the sequence is MALGKNKRISKGGKRGKRGKAQE.

The protein belongs to the eukaryotic ribosomal protein eS1 family. Component of the small ribosomal subunit. Mature ribosomes consist of a small (40S) and a large (60S) subunit. The 40S subunit contains about 33 different proteins and 1 molecule of RNA (18S). The 60S subunit contains about 49 different proteins and 3 molecules of RNA (25S, 5.8S and 5S).

Its subcellular location is the cytoplasm. In Leishmania infantum, this protein is Small ribosomal subunit protein eS1B.